The following is a 376-amino-acid chain: Cyclin-dependent kinase 9-A (376 aa).

Residues 19–319 enclose the Protein kinase domain; it reads YERLAKIGQG…SDDALNNDFF (301 aa). ATP-binding positions include 25 to 33 and Lys48; that span reads IGQGTFGEV. Asp153 acts as the Proton acceptor in catalysis. The disordered stretch occupies residues 345-376; the sequence is PPRRRGGHMPQQPANQARNPAATNQSEFERVF. Positions 354–369 are enriched in low complexity; the sequence is PQQPANQARNPAATNQ.

Belongs to the protein kinase superfamily. CMGC Ser/Thr protein kinase family. CDC2/CDKX subfamily. As to quaternary structure, associates with cyclin-T to form P-TEFb.

It is found in the nucleus. The enzyme catalyses L-seryl-[protein] + ATP = O-phospho-L-seryl-[protein] + ADP + H(+). It catalyses the reaction L-threonyl-[protein] + ATP = O-phospho-L-threonyl-[protein] + ADP + H(+). The catalysed reaction is [DNA-directed RNA polymerase] + ATP = phospho-[DNA-directed RNA polymerase] + ADP + H(+). In terms of biological role, member of the cyclin-dependent kinase pair (CDK9/cyclin-T) complex, also called positive transcription elongation factor B (P-TEFb), which is proposed to facilitate the transition from abortive to production elongation by phosphorylating the CTD (C-terminal domain) of the large subunit of RNA polymerase II (RNAP II) and SUPT5H. The sequence is that of Cyclin-dependent kinase 9-A (cdk9-a) from Xenopus laevis (African clawed frog).